Consider the following 319-residue polypeptide: Protease HtpX homolog (319 aa).

The next 2 helical transmembrane spans lie at L3 to L23 and T32 to F52. H134 is a binding site for Zn(2+). E135 is a catalytic residue. Residue H138 coordinates Zn(2+). Helical transmembrane passes span V146–W166 and M182–V202. A Zn(2+)-binding site is contributed by E210.

It belongs to the peptidase M48B family. Zn(2+) serves as cofactor.

It localises to the cell membrane. The chain is Protease HtpX homolog from Aeropyrum pernix (strain ATCC 700893 / DSM 11879 / JCM 9820 / NBRC 100138 / K1).